Here is a 380-residue protein sequence, read N- to C-terminus: Peptide chain release factor 1-like, mitochondrial (380 aa).

A mitochondrion-targeting transit peptide spans 1–26 (MRSRVLWGAARWLWPRRAVGPARRPL). Positions 63-117 (ELLAVIKLLNEKERELRETEHLLHDENEDLRKLAENEITLCQKEITQLKHQIILL) form a coiled coil. The segment at 236–300 (PKDLRIDTKR…LRAKLYSMHL (65 aa)) is GGQ domain. The GGQ signature appears at 250 to 252 (GGQ). N5-methylglutamine is present on Gln-252.

It belongs to the prokaryotic/mitochondrial release factor family. Methylation of glutamine in the GGQ triplet by HEMK1 is conserved from bacteria to mammals. As to expression, expressed in skeletal muscle (at protein level).

It is found in the mitochondrion. Its function is as follows. Mitochondrial peptide chain release factor that directs the termination of translation in response to the peptide chain termination codons UAA and UAG. The polypeptide is Peptide chain release factor 1-like, mitochondrial (Homo sapiens (Human)).